We begin with the raw amino-acid sequence, 194 residues long: Ribonuclease VapC1 (194 aa).

A PINc domain is found at 34 to 134 (YVIDTSAIIS…TDDYSIQNVA (101 aa)). 2 residues coordinate Mg(2+): D37 and D150.

It belongs to the PINc/VapC protein family. Mg(2+) serves as cofactor.

Toxic component of a type II toxin-antitoxin (TA) system. An RNase. The sequence is that of Ribonuclease VapC1 from Thermoplasma acidophilum (strain ATCC 25905 / DSM 1728 / JCM 9062 / NBRC 15155 / AMRC-C165).